Reading from the N-terminus, the 425-residue chain is Tyrosine--tRNA ligase (425 aa).

Tyr-37 contacts L-tyrosine. Positions 42-51 (PTADSLHLGH) match the 'HIGH' region motif. The L-tyrosine site is built by Tyr-175 and Gln-179. The 'KMSKS' region signature appears at 235 to 239 (KFGKT). Lys-238 contributes to the ATP binding site. Positions 357–415 (QDLQQALVNAELAPSRGQARKLIEAKSVSINGSLQTDAEYTFGEDDRLFGQYTLLRRGK) constitute an S4 RNA-binding domain.

It belongs to the class-I aminoacyl-tRNA synthetase family. TyrS type 1 subfamily. Homodimer.

Its subcellular location is the cytoplasm. The catalysed reaction is tRNA(Tyr) + L-tyrosine + ATP = L-tyrosyl-tRNA(Tyr) + AMP + diphosphate + H(+). Its function is as follows. Catalyzes the attachment of tyrosine to tRNA(Tyr) in a two-step reaction: tyrosine is first activated by ATP to form Tyr-AMP and then transferred to the acceptor end of tRNA(Tyr). The chain is Tyrosine--tRNA ligase from Erwinia tasmaniensis (strain DSM 17950 / CFBP 7177 / CIP 109463 / NCPPB 4357 / Et1/99).